The following is a 467-amino-acid chain: MGELGTMGGTRDFLPDEMIRREYVIDTLKTIFRKYGFEPLETPAIERWETLAGKYGEEGEKLIYHVVSSGSLGTLKAGERTEHALRYDLTVPLARVVGMYGDQMVADPADPKKQTRRLPRPFKRYQIQPVWRGDRPGEGRYREFHQCDADVVGSTSPLVETELIALTVEAFKALGFADFTVKINHRQLLKGLIEQAGIAPTKEATVLTSIDKLDKLPPEKVRLELAGKGLNADQLDALFQVIALEGTSEQVLEGARSLLAGSEAAQRGIGELTKLLHYLEALGVDSAYYRIDLALARGLDYYTGTIFETVSAAKVGSVGAGGRYDRLIYDLSGGKADLPACGTSFGLDRILAAMDQLGLFASLRRAGEVLVLHFGDPGVSQVCFELVRGLREAGVRAELGYHEEPFTPNGMRQQLGYANEKGFAYAVIVGPDEMAQGQAALRDLTTRRQEKIPLATAGQLIAGRLRS.

It belongs to the class-II aminoacyl-tRNA synthetase family. As to quaternary structure, homodimer.

It is found in the cytoplasm. The catalysed reaction is tRNA(His) + L-histidine + ATP = L-histidyl-tRNA(His) + AMP + diphosphate + H(+). The sequence is that of Histidine--tRNA ligase from Gloeobacter violaceus (strain ATCC 29082 / PCC 7421).